The sequence spans 252 residues: L-aspartate dehydrogenase (252 aa).

The NAD(+) site is built by Ala-119 and Asn-175. His-203 is an active-site residue.

Belongs to the L-aspartate dehydrogenase family.

The enzyme catalyses L-aspartate + NADP(+) + H2O = oxaloacetate + NH4(+) + NADPH + H(+). The catalysed reaction is L-aspartate + NAD(+) + H2O = oxaloacetate + NH4(+) + NADH + H(+). The protein operates within cofactor biosynthesis; NAD(+) biosynthesis; iminoaspartate from L-aspartate (dehydrogenase route): step 1/1. Functionally, specifically catalyzes the NAD or NADP-dependent dehydrogenation of L-aspartate to iminoaspartate. The protein is L-aspartate dehydrogenase of Methanospirillum hungatei JF-1 (strain ATCC 27890 / DSM 864 / NBRC 100397 / JF-1).